A 76-amino-acid polypeptide reads, in one-letter code: DNA-directed RNA polymerase subunit epsilon (76 aa).

It belongs to the RNA polymerase subunit epsilon family. RNAP is composed of a core of 2 alpha, a beta and a beta' subunit. The core is associated with a delta subunit, and at least one of epsilon or omega. When a sigma factor is associated with the core the holoenzyme is formed, which can initiate transcription.

The catalysed reaction is RNA(n) + a ribonucleoside 5'-triphosphate = RNA(n+1) + diphosphate. In terms of biological role, a non-essential component of RNA polymerase (RNAP). The protein is DNA-directed RNA polymerase subunit epsilon of Streptococcus thermophilus (strain CNRZ 1066).